Consider the following 396-residue polypeptide: Serpin-ZXA (396 aa).

The interval 343 to 367 (GTEAAAATAAVITLRSAPIAEDFVA) is RCL.

This sequence belongs to the serpin family.

In terms of biological role, probable serine protease inhibitor. This chain is Serpin-ZXA, found in Oryza sativa subsp. japonica (Rice).